A 249-amino-acid chain; its full sequence is Uridylate kinase (249 aa).

16 to 19 contacts ATP; the sequence is KLSG. Residue Gly57 participates in UMP binding. ATP contacts are provided by Gly58 and Arg62. Residues Asp77 and 138 to 145 contribute to the UMP site; that span reads AGMPYFST. ATP contacts are provided by Asn166, Tyr172, and Asp175.

It belongs to the UMP kinase family. Homohexamer.

The protein localises to the cytoplasm. It carries out the reaction UMP + ATP = UDP + ADP. Its pathway is pyrimidine metabolism; CTP biosynthesis via de novo pathway; UDP from UMP (UMPK route): step 1/1. Inhibited by UTP. Functionally, catalyzes the reversible phosphorylation of UMP to UDP. In Bifidobacterium adolescentis (strain ATCC 15703 / DSM 20083 / NCTC 11814 / E194a), this protein is Uridylate kinase.